A 279-amino-acid chain; its full sequence is Thymidylate synthase 1 (279 aa).

A dUMP-binding site is contributed by 141 to 142 (RR). Cys161 functions as the Nucleophile in the catalytic mechanism. DUMP contacts are provided by residues 181–184 (RSND), Asn192, and 222–224 (HVY). Asp184 contributes to the (6R)-5,10-methylene-5,6,7,8-tetrahydrofolate binding site. Ala278 serves as a coordination point for (6R)-5,10-methylene-5,6,7,8-tetrahydrofolate.

Belongs to the thymidylate synthase family. Bacterial-type ThyA subfamily. As to quaternary structure, homodimer.

Its subcellular location is the cytoplasm. It carries out the reaction dUMP + (6R)-5,10-methylene-5,6,7,8-tetrahydrofolate = 7,8-dihydrofolate + dTMP. It functions in the pathway pyrimidine metabolism; dTTP biosynthesis. In terms of biological role, catalyzes the reductive methylation of 2'-deoxyuridine-5'-monophosphate (dUMP) to 2'-deoxythymidine-5'-monophosphate (dTMP) while utilizing 5,10-methylenetetrahydrofolate (mTHF) as the methyl donor and reductant in the reaction, yielding dihydrofolate (DHF) as a by-product. This enzymatic reaction provides an intracellular de novo source of dTMP, an essential precursor for DNA biosynthesis. The protein is Thymidylate synthase 1 of Bacillus spizizenii (strain ATCC 23059 / NRRL B-14472 / W23) (Bacillus subtilis subsp. spizizenii).